A 656-amino-acid polypeptide reads, in one-letter code: F-box/LRR-repeat protein 10 (656 aa).

One can recognise an F-box domain in the interval 20 to 66 (ERSLDLLPAALLETIMTKLDVASLCSLASTCKTLKSCVTRVLTFTPN). LRR repeat units lie at residues 71–96 (NVSLSMETVRPLLFPNQQLSSLKLDC), 120–145 (CRDFSGDLISEIGRKCKDLRLLCLGS), 151–176 (GRSISRCALEDLLNGCSHLEVLALMF), 194–221 (SDRLTHLELGHITSRMMTQLLTSTEISG), 243–268 (VDCITDAVVKAISKSLPSLIDLDIRD), 277–301 (VSDLTDFGLHEINQNGKLKHLSLIR), 310–335 (FRRVSDQGMLFLADKCLGMETICLGG), 336–361 (FCRVTDAGFKTILHSCASLSKFSIYH), 362–387 (GPKLTDLVFHDILATTLSLSHVSLRR), 388–412 (CHLLTDHAIQKLASSLKLENLDLRG), 413–437 (CRNLRDETLTAVSHLPKLKVLLLDG), 439–463 (DISDTGLSYLKEGVLDSLVSLSVRG), 464–491 (CRNLTDKFMSTLFDGSSKLALRELDLSN), 492–517 (LPNLTDAAIFALAKSGAPITKLQLRE), 518–551 (CRLIGDASVMALASTRVYEDECPGSSLCLLDLYD), and 552–578 (CGGITQLSFKWLKKPFFPRLKWLGITG). A disordered region spans residues 632 to 656 (ILGDEGDVEMEDAEDESEEDASEED).

The chain is F-box/LRR-repeat protein 10 (FBL10) from Arabidopsis thaliana (Mouse-ear cress).